The following is a 311-amino-acid chain: MDNLTKVTEFLLMEFSGIWELQVLHAGLFLLIYLAVLVGNLLIIAVITLDQHLHTPMYFFLKNLSVLDLCYISVTVPKSIRNSLTRRSSISYLGCVAQVYFFSAFASAELAFLTVMSYDRYVAICHPLQYRAVMTSGGCYQMAVTTWLSCFSYAAVHTGNMFREHVCRSSVIHQFFRDIPHVLALVSCEVFFVEFLTLALSSCLVLGCFILMMISYFQIFSTVLRIPSGQSRAKAFSTCSPQLIVIMLFLTTGLFAALGPIAKALSIQDLVIALTYTVLPPFLNPIIYSLRNKEIKTAMWRLFVKIYFLQK.

Residues 1 to 26 (MDNLTKVTEFLLMEFSGIWELQVLHA) lie on the Extracellular side of the membrane. N-linked (GlcNAc...) asparagine glycosylation occurs at asparagine 3. Residues 27-47 (GLFLLIYLAVLVGNLLIIAVI) traverse the membrane as a helical segment. Residues 48-55 (TLDQHLHT) lie on the Cytoplasmic side of the membrane. The helical transmembrane segment at 56–76 (PMYFFLKNLSVLDLCYISVTV) threads the bilayer. Topologically, residues 77–92 (PKSIRNSLTRRSSISY) are extracellular. A helical membrane pass occupies residues 93 to 113 (LGCVAQVYFFSAFASAELAFL). A disulfide bond links cysteine 95 and cysteine 188. Residues 114–141 (TVMSYDRYVAICHPLQYRAVMTSGGCYQ) are Cytoplasmic-facing. A helical transmembrane segment spans residues 142–162 (MAVTTWLSCFSYAAVHTGNMF). Over 163–189 (REHVCRSSVIHQFFRDIPHVLALVSCE) the chain is Extracellular. A helical membrane pass occupies residues 190–210 (VFFVEFLTLALSSCLVLGCFI). Topologically, residues 211-241 (LMMISYFQIFSTVLRIPSGQSRAKAFSTCSP) are cytoplasmic. Residues 242–262 (QLIVIMLFLTTGLFAALGPIA) form a helical membrane-spanning segment. Over 263–269 (KALSIQD) the chain is Extracellular. The helical transmembrane segment at 270 to 290 (LVIALTYTVLPPFLNPIIYSL) threads the bilayer. At 291–311 (RNKEIKTAMWRLFVKIYFLQK) the chain is on the cytoplasmic side.

Belongs to the G-protein coupled receptor 1 family.

The protein resides in the cell membrane. Functionally, odorant receptor. This is Olfactory receptor 14I1 (OR14I1) from Homo sapiens (Human).